A 273-amino-acid polypeptide reads, in one-letter code: Tryptophan synthase alpha chain (273 aa).

Catalysis depends on proton acceptor residues glutamate 56 and aspartate 67.

Belongs to the TrpA family. As to quaternary structure, tetramer of two alpha and two beta chains.

It carries out the reaction (1S,2R)-1-C-(indol-3-yl)glycerol 3-phosphate + L-serine = D-glyceraldehyde 3-phosphate + L-tryptophan + H2O. It functions in the pathway amino-acid biosynthesis; L-tryptophan biosynthesis; L-tryptophan from chorismate: step 5/5. In terms of biological role, the alpha subunit is responsible for the aldol cleavage of indoleglycerol phosphate to indole and glyceraldehyde 3-phosphate. This chain is Tryptophan synthase alpha chain, found in Shewanella baltica (strain OS185).